A 352-amino-acid polypeptide reads, in one-letter code: Membrane progestin receptor alpha (352 aa).

The Cytoplasmic segment spans residues 1-75 (MATVVMEQIG…FLTLFQRHNE (75 aa)). A helical transmembrane segment spans residues 76–96 (TLNVWTHLLAAFIILVKWQEI). The Extracellular portion of the chain corresponds to 97–110 (SETVDFLRDPHAQP). A helical transmembrane segment spans residues 111–131 (LFIVLLAAFTYLSFSALAHLL). The Cytoplasmic portion of the chain corresponds to 132–139 (SAKSELSY). Residues 140–160 (YTFYFLDYVGVAVYQYGSALA) traverse the membrane as a helical segment. The Extracellular portion of the chain corresponds to 161–175 (HYYYAIEKEWHTKVQ). A helical transmembrane segment spans residues 176–196 (GLFLPAAAFLAWLTCFGCCYG). Residues 197-242 (KYASPELPKVANKLFQVVPSALAYCLDISPVVHRIYSCYQEGCSDP) are Cytoplasmic-facing. A helical membrane pass occupies residues 243–263 (VVAYHFYHVVFFLIGAYFFCC). The Extracellular portion of the chain corresponds to 264-275 (PHPESLFPGKCD). The helical transmembrane segment at 276-296 (FIGQGHQLFHVFVVVCTLTQV) threads the bilayer. The Cytoplasmic segment spans residues 297 to 316 (EALRTDFTERRPFYERLHGD). The chain crosses the membrane as a helical span at residues 317–337 (LAHDAVALFIFTACCSALTAF). At 338–352 (YVRQRVRASLHEKGE) the chain is on the extracellular side.

It belongs to the ADIPOR family. As to expression, strongly expressed in ovary and brain; lower expression in testis and pituitary. Not detected in heart, kidney, spleen, intestine, gill and muscle.

The protein localises to the cell membrane. Its function is as follows. Steroid membrane receptor. Binds progesterone, progestin and 17-hydroxyprogesterone in vitro. Capable of mediating progestin-induced oocyte maturation. The chain is Membrane progestin receptor alpha (mpra) from Cynoscion nebulosus (Spotted seatrout).